Reading from the N-terminus, the 354-residue chain is UDP-galactose transporter homolog 1 (354 aa).

5 consecutive transmembrane segments (helical) span residues 6-26 (GGSI…FLTW), 54-74 (LVIN…YSVV), 95-112 (FFKS…SSPL), 123-143 (LAYL…HFVL), and 148-168 (FPLY…IFTL). N-linked (GlcNAc...) asparagine glycosylation occurs at Asn-202. Helical transmembrane passes span 227–247 (YLMC…ALIF), 268–288 (MNIL…FIIL), 295–317 (ILIT…LFGH), and 321–340 (GLQW…EALV).

Belongs to the nucleotide-sugar transporter family. SLC35B subfamily.

The protein resides in the endoplasmic reticulum membrane. In terms of biological role, may be involved in specific transport of UDP-Gal from the cytosol to the Golgi lumen. Involved in the maintenance of optimal conditions for the folding of secretory pathway proteins in the endoplasmic reticulum. This Debaryomyces hansenii (strain ATCC 36239 / CBS 767 / BCRC 21394 / JCM 1990 / NBRC 0083 / IGC 2968) (Yeast) protein is UDP-galactose transporter homolog 1 (HUT1).